Reading from the N-terminus, the 862-residue chain is S-layer protein EA1 (862 aa).

An N-terminal signal peptide occupies residues 1-29; it reads MAKTNSYKKVIAGTMTAAMVAGIVSPVAA. 3 SLH domains span residues 30–93, 94–151, and 152–214; these read AGKS…NAQP, SFKD…KVNG, and ELVT…DNAQ.

It localises to the secreted. It is found in the cell wall. The protein resides in the S-layer. Its function is as follows. The S-layer is a paracrystalline mono-layered assembly of proteins which coat the surface of bacteria. This chain is S-layer protein EA1 (eag), found in Bacillus anthracis.